We begin with the raw amino-acid sequence, 336 residues long: Ribosomal RNA large subunit methyltransferase F (336 aa).

It belongs to the methyltransferase superfamily. METTL16/RlmF family.

It localises to the cytoplasm. The catalysed reaction is adenosine(1618) in 23S rRNA + S-adenosyl-L-methionine = N(6)-methyladenosine(1618) in 23S rRNA + S-adenosyl-L-homocysteine + H(+). Functionally, specifically methylates the adenine in position 1618 of 23S rRNA. This is Ribosomal RNA large subunit methyltransferase F from Yersinia pseudotuberculosis serotype I (strain IP32953).